We begin with the raw amino-acid sequence, 439 residues long: Tryptophan synthase beta chain 2 (439 aa).

K99 bears the N6-(pyridoxal phosphate)lysine mark.

Belongs to the TrpB family. In terms of assembly, tetramer of two alpha and two beta chains. Pyridoxal 5'-phosphate serves as cofactor.

The enzyme catalyses (1S,2R)-1-C-(indol-3-yl)glycerol 3-phosphate + L-serine = D-glyceraldehyde 3-phosphate + L-tryptophan + H2O. It participates in amino-acid biosynthesis; L-tryptophan biosynthesis; L-tryptophan from chorismate: step 5/5. Functionally, the beta subunit is responsible for the synthesis of L-tryptophan from indole and L-serine. The chain is Tryptophan synthase beta chain 2 (trpB2) from Corynebacterium efficiens (strain DSM 44549 / YS-314 / AJ 12310 / JCM 11189 / NBRC 100395).